We begin with the raw amino-acid sequence, 384 residues long: Na(+)/H(+) antiporter NhaA (384 aa).

11 helical membrane passes run 9–29, 58–78, 94–114, 124–144, 153–173, 179–199, 204–224, 256–276, 285–305, 325–345, and 357–377; these read NLET…IIIA, LLLW…GLEI, LVPA…FIFF, GWAI…SLLG, ILLT…IALF, SLLS…LNYF, ISVF…SGVH, VVFL…FVGL, VVLG…FLSL, VYGI…IGSL, and MVKI…FLVL.

It belongs to the NhaA Na(+)/H(+) (TC 2.A.33) antiporter family.

Its subcellular location is the cell inner membrane. It carries out the reaction Na(+)(in) + 2 H(+)(out) = Na(+)(out) + 2 H(+)(in). In terms of biological role, na(+)/H(+) antiporter that extrudes sodium in exchange for external protons. The polypeptide is Na(+)/H(+) antiporter NhaA (Legionella pneumophila (strain Lens)).